The sequence spans 491 residues: Keratin, type I cytoskeletal 39 (491 aa).

Positions 1-96 are head; the sequence is MDTKGCTTTN…WYGEGINSNE (96 aa). Residues 96–407 enclose the IF rod domain; sequence EKETMQILNE…SLLESSDGKR (312 aa). Positions 97–131 are coil 1A; it reads KETMQILNERLANYLQKVRMLERENAELESKIQEE. Residues 132-142 are linker 1; it reads SNKELPVLCPD. Positions 143–243 are coil 1B; that stretch reads YLSYYTTIEE…HKEEINSLQC (101 aa). The tract at residues 244–259 is linker 12; sequence QLGERLDIEVTAAPSA. Residues 260 to 403 are coil 2; the sequence is DLNQVLQEMR…TTYRSLLESS (144 aa). A tail region spans residues 404–491; the sequence is DGKRPCYPRA…PCFIIRPAKV (88 aa).

It belongs to the intermediate filament family. As to quaternary structure, heterotetramer of two type I and two type II keratins. In terms of tissue distribution, expressed in skin and scalp. In the hair follicle, it is present in the upper hair cuticle and the upper cortex. Also present in the in the upper portion of beard hairs (at protein level).

In terms of biological role, may play a role in late hair differentiation. This is Keratin, type I cytoskeletal 39 (KRT39) from Homo sapiens (Human).